The primary structure comprises 250 residues: 23S rRNA (guanosine-2'-O-)-methyltransferase RlmB (250 aa).

Residues glycine 197, isoleucine 217, and methionine 226 each contribute to the S-adenosyl-L-methionine site.

This sequence belongs to the class IV-like SAM-binding methyltransferase superfamily. RNA methyltransferase TrmH family. RlmB subfamily.

It localises to the cytoplasm. It catalyses the reaction guanosine(2251) in 23S rRNA + S-adenosyl-L-methionine = 2'-O-methylguanosine(2251) in 23S rRNA + S-adenosyl-L-homocysteine + H(+). Its function is as follows. Specifically methylates the ribose of guanosine 2251 in 23S rRNA. The sequence is that of 23S rRNA (guanosine-2'-O-)-methyltransferase RlmB from Neisseria meningitidis serogroup B (strain ATCC BAA-335 / MC58).